A 302-amino-acid polypeptide reads, in one-letter code: Protoheme IX farnesyltransferase (302 aa).

9 helical membrane passes run 24-44, 48-68, 97-117, 120-140, 147-167, 174-194, 221-241, 245-265, and 282-302; these read VVSL…FSGY, FFSV…AGAL, AALV…ELAV, LSAV…TVYL, NIVV…AAVA, SLVL…ALAL, ILCY…LRFS, YMIV…NVYL, and FLLF…GMLI.

The protein belongs to the UbiA prenyltransferase family. Protoheme IX farnesyltransferase subfamily.

The protein resides in the cell inner membrane. It carries out the reaction heme b + (2E,6E)-farnesyl diphosphate + H2O = Fe(II)-heme o + diphosphate. The protein operates within porphyrin-containing compound metabolism; heme O biosynthesis; heme O from protoheme: step 1/1. Functionally, converts heme B (protoheme IX) to heme O by substitution of the vinyl group on carbon 2 of heme B porphyrin ring with a hydroxyethyl farnesyl side group. The protein is Protoheme IX farnesyltransferase of Neorickettsia sennetsu (strain ATCC VR-367 / Miyayama) (Ehrlichia sennetsu).